We begin with the raw amino-acid sequence, 1403 residues long: Baculoviral IAP repeat-containing protein 1f (1403 aa).

3 BIR repeats span residues 60–127, 159–227, and 278–345; these read EAKR…CEFL, EEAR…CEFL, and EELR…CVFL. Positions 315, 318, 335, and 342 each coordinate Zn(2+). One can recognise an NACHT domain in the interval 464 to 759; it reads SVMCVEGEAG…EFLAAVRLTE (296 aa). Residue 473-478 participates in ATP binding; sequence GSGKTT.

In terms of assembly, component of the NLRC4 inflammasome, at least composed of NLRC4, caspase-1 (CASP1) and some NAIP protein. As to quaternary structure, (Microbial infection) Interacts with S.typhimurium (Salmonella) flagellin.

Functionally, sensor component of the NLRC4 inflammasome that specifically recognizes and binds flagellin from pathogenic bacteria. Association of pathogenic bacteria proteins drives in turn drive assembly and activation of the NLRC4 inflammasome, promoting caspase-1 activation, cytokine production and macrophage pyroptosis. The NLRC4 inflammasome is activated as part of the innate immune response to a range of intracellular bacteria. The NLRC4 inflammasome senses Gram-negative bacteria such as L.pneumophila and P.aeruginosa, enteric pathogens S.typhimurium (Salmonella) and S.flexneri. May contribute to prevent motor-neuron apoptosis induced by a variety of signals. In Mus musculus (Mouse), this protein is Baculoviral IAP repeat-containing protein 1f (Naip6).